Here is a 1064-residue protein sequence, read N- to C-terminus: Carbamoyl phosphate synthase pyrimidine-specific large chain (1064 aa).

The carboxyphosphate synthetic domain stretch occupies residues 1 to 401 (MPKRRDIETI…SLLKAVRSLE (401 aa)). The ATP site is built by R129, R169, G175, G176, R208, I210, G241, I242, H243, Q284, and E298. The 195-residue stretch at 133–327 (RALMNELGEP…IAKLAAKIAV (195 aa)) folds into the ATP-grasp 1 domain. Residues Q284, E298, and N300 each coordinate Mg(2+). 3 residues coordinate Mn(2+): Q284, E298, and N300. The oligomerization domain stretch occupies residues 402 to 546 (IGVHHLELNE…YSTYEEENES (145 aa)). The carbamoyl phosphate synthetic domain stretch occupies residues 547-929 (IVTEKPSVIV…ALYKGLVASG (383 aa)). The ATP-grasp 2 domain occupies 671 to 861 (EQALSELGIP…MANLATKAIL (191 aa)). Residues R707, R746, I748, E752, G777, V778, H779, S780, Q820, and E832 each contribute to the ATP site. Positions 820, 832, and 834 each coordinate Mg(2+). Mn(2+)-binding residues include Q820, E832, and N834. One can recognise an MGS-like domain in the interval 930–1064 (IQIQPHGAVL…TAMTEGLVRS (135 aa)). The interval 930 to 1064 (IQIQPHGAVL…TAMTEGLVRS (135 aa)) is allosteric domain.

This sequence belongs to the CarB family. In terms of assembly, composed of two chains; the small (or glutamine) chain promotes the hydrolysis of glutamine to ammonia, which is used by the large (or ammonia) chain to synthesize carbamoyl phosphate. Tetramer of heterodimers (alpha,beta)4. The cofactor is Mg(2+). It depends on Mn(2+) as a cofactor.

The catalysed reaction is hydrogencarbonate + L-glutamine + 2 ATP + H2O = carbamoyl phosphate + L-glutamate + 2 ADP + phosphate + 2 H(+). The enzyme catalyses hydrogencarbonate + NH4(+) + 2 ATP = carbamoyl phosphate + 2 ADP + phosphate + 2 H(+). It participates in amino-acid biosynthesis; L-arginine biosynthesis; carbamoyl phosphate from bicarbonate: step 1/1. The protein operates within pyrimidine metabolism; UMP biosynthesis via de novo pathway; (S)-dihydroorotate from bicarbonate: step 1/3. Its function is as follows. Small subunit of the glutamine-dependent carbamoyl phosphate synthetase (CPSase). CPSase catalyzes the formation of carbamoyl phosphate from the ammonia moiety of glutamine, carbonate, and phosphate donated by ATP, constituting the first step of the biosynthetic pathway leading to pyrimidine nucleotides. The large subunit (synthetase) binds the substrates ammonia (free or transferred from glutamine from the small subunit), hydrogencarbonate and ATP and carries out an ATP-coupled ligase reaction, activating hydrogencarbonate by forming carboxy phosphate which reacts with ammonia to form carbamoyl phosphate. The sequence is that of Carbamoyl phosphate synthase pyrimidine-specific large chain (pyrAB) from Geobacillus stearothermophilus (Bacillus stearothermophilus).